Here is a 1444-residue protein sequence, read N- to C-terminus: ABC transporter G family member 39 (1444 aa).

Positions 1–36 (MDIVRMGSVASGGGSVRRTASSWRGTSGRSDAFGRS) are disordered. Residues 19-29 (TASSWRGTSGR) are compositionally biased toward polar residues. The region spanning 154 to 426 (LSAMRIVSSG…FEAMGFKCPE (273 aa)) is the ABC transporter 1 domain. 187 to 194 (GPPGSGKT) provides a ligand contact to ATP. The region spanning 504–717 (ELTKACFSRE…AQNAIAVNEF (214 aa)) is the ABC transmembrane type-2 1 domain. Transmembrane regions (helical) follow at residues 522-542 (FVYI…MTVF), 555-575 (GAIF…NGFA), 610-630 (IPIS…VMGF), 642-662 (VLLV…AALG), 667-687 (VADT…GFLI), and 754-774 (IGVG…ILFL). An ABC transporter 2 domain is found at 846–1098 (ITFDNIRYSV…HLINYFEGIQ (253 aa)). 891–898 (GVSGAGKT) is an ATP binding site. The region spanning 1171-1385 (TQCMACLWKQ…TLYGLVASQY (215 aa)) is the ABC transmembrane type-2 2 domain. The next 7 helical transmembrane spans lie at 1192–1212 (ATRI…FLNL), 1220–1240 (LDLF…GIQN), 1278–1298 (IPHI…LIGF), 1305–1325 (FFWY…YGMM), 1335–1355 (IAAI…GFLI), 1362–1382 (IWWR…GLVA), and 1414–1434 (LGYV…VFAF).

It belongs to the ABC transporter superfamily. ABCG family. PDR (TC 3.A.1.205) subfamily.

Its subcellular location is the membrane. In terms of biological role, may be a general defense protein. The polypeptide is ABC transporter G family member 39 (Oryza sativa subsp. japonica (Rice)).